We begin with the raw amino-acid sequence, 545 residues long: CTP synthase (545 aa).

Residues 1-266 are amidoligase domain; that stretch reads MTTNYIFVTG…DDYICKRFSL (266 aa). CTP is bound at residue Ser-14. Ser-14 contributes to the UTP binding site. ATP is bound by residues 15–20 and Asp-72; that span reads SLGKGI. Residues Asp-72 and Glu-140 each coordinate Mg(2+). CTP-binding positions include 147–149, 187–192, and Lys-223; these read DIE and KTKPTQ. UTP-binding positions include 187–192 and Lys-223; that span reads KTKPTQ. 239 to 241 is an ATP binding site; that stretch reads KDV. Positions 291–542 constitute a Glutamine amidotransferase type-1 domain; that stretch reads TIGMVGKYIE…VKAASEYQKR (252 aa). Gly-352 contacts L-glutamine. Cys-379 serves as the catalytic Nucleophile; for glutamine hydrolysis. Residues 380 to 383, Glu-403, and Arg-470 contribute to the L-glutamine site; that span reads LGMQ. Active-site residues include His-515 and Glu-517.

Belongs to the CTP synthase family. In terms of assembly, homotetramer.

The catalysed reaction is UTP + L-glutamine + ATP + H2O = CTP + L-glutamate + ADP + phosphate + 2 H(+). The enzyme catalyses L-glutamine + H2O = L-glutamate + NH4(+). It catalyses the reaction UTP + NH4(+) + ATP = CTP + ADP + phosphate + 2 H(+). Its pathway is pyrimidine metabolism; CTP biosynthesis via de novo pathway; CTP from UDP: step 2/2. With respect to regulation, allosterically activated by GTP, when glutamine is the substrate; GTP has no effect on the reaction when ammonia is the substrate. The allosteric effector GTP functions by stabilizing the protein conformation that binds the tetrahedral intermediate(s) formed during glutamine hydrolysis. Inhibited by the product CTP, via allosteric rather than competitive inhibition. Its function is as follows. Catalyzes the ATP-dependent amination of UTP to CTP with either L-glutamine or ammonia as the source of nitrogen. Regulates intracellular CTP levels through interactions with the four ribonucleotide triphosphates. The protein is CTP synthase of Klebsiella pneumoniae subsp. pneumoniae (strain ATCC 700721 / MGH 78578).